We begin with the raw amino-acid sequence, 636 residues long: Threonine--tRNA ligase (636 aa).

A TGS domain is found at Met-1 to Lys-60. The segment at Asp-242–Pro-533 is catalytic. Cys-333, His-384, and His-510 together coordinate Zn(2+).

This sequence belongs to the class-II aminoacyl-tRNA synthetase family. Homodimer. The cofactor is Zn(2+).

Its subcellular location is the cytoplasm. It carries out the reaction tRNA(Thr) + L-threonine + ATP = L-threonyl-tRNA(Thr) + AMP + diphosphate + H(+). Its function is as follows. Catalyzes the attachment of threonine to tRNA(Thr) in a two-step reaction: L-threonine is first activated by ATP to form Thr-AMP and then transferred to the acceptor end of tRNA(Thr). Also edits incorrectly charged L-seryl-tRNA(Thr). This is Threonine--tRNA ligase from Wigglesworthia glossinidia brevipalpis.